The following is a 145-amino-acid chain: MTLVKIGLWGGNGGSAQDISVPPKKLLGVTIYSSDAIRSIAFNYIGVDGQEYAIGPWGGGEGTSTEIKLGSSEHIKEISGTHGPVYDLADIVTYLKIVTSANNTYEAGVPNGKEFSIPLQDSGHVVGFFGRSGTLIDAIGIYVHP.

In terms of domain architecture, Jacalin-type lectin spans 3–145 (LVKIGLWGGN…IDAIGIYVHP (143 aa)). 2 consecutive repeat copies span residues 6–15 (IGLWGGNGGS) and 54–64 (IGPWGGGEGTS). Residues 6–64 (IGLWGGNGGSAQDISVPPKKLLGVTIYSSDAIRSIAFNYIGVDGQEYAIGPWGGGEGTS) are 2 X approximate repeats, Gly-rich.

As to expression, sheaths and roots from mature plants and seedlings.

This Oryza sativa subsp. indica (Rice) protein is Salt stress-induced protein (SALT).